Consider the following 395-residue polypeptide: Tyrosine--tRNA ligase (395 aa).

The 'HIGH' region motif lies at Pro42–His51. The short motif at Lys226–Ser230 is the 'KMSKS' region element. Lys229 contacts ATP. The S4 RNA-binding domain maps to Ile334–Val394.

It belongs to the class-I aminoacyl-tRNA synthetase family. TyrS type 2 subfamily. In terms of assembly, homodimer.

It localises to the cytoplasm. It carries out the reaction tRNA(Tyr) + L-tyrosine + ATP = L-tyrosyl-tRNA(Tyr) + AMP + diphosphate + H(+). In terms of biological role, catalyzes the attachment of tyrosine to tRNA(Tyr) in a two-step reaction: tyrosine is first activated by ATP to form Tyr-AMP and then transferred to the acceptor end of tRNA(Tyr). In Haemophilus influenzae (strain 86-028NP), this protein is Tyrosine--tRNA ligase.